The primary structure comprises 237 residues: uncharacterized protein (237 aa).

A helical membrane pass occupies residues 53–70; the sequence is LIFLATVLAGLILFYFGV. The segment at 85-155 is disordered; that stretch reads PPIVIKPVAP…TQEKKDVKVA (71 aa). Residues 98–157 are a coiled coil; that stretch reads KTQESNQTTKKEVKQEEQKKEEPKKMVQKQETQEKREVKKSEKNEVKQTQEKKDVKVAKK. Basic and acidic residues-rich tracts occupy residues 106–122 and 128–155; these read TKKE…EPKK and ETQE…VKVA. Residues 165–237 enclose the SPOR domain; sequence AANLRTYKFQ…HFKDAIFVRK (73 aa).

The protein resides in the membrane. This is an uncharacterized protein from Aquifex aeolicus (strain VF5).